We begin with the raw amino-acid sequence, 413 residues long: Na(+)/H(+) antiporter NhaA (413 aa).

A run of 11 helical transmembrane segments spans residues 15-35 (LESG…ALFV), 57-77 (LLHW…GLEI), 93-113 (ALPC…YASL), 123-143 (GWAI…SLLG), 152-172 (IFLA…IAVF), 175-195 (AELN…LLGF), 211-231 (VALW…GVVL), 261-281 (WVAF…SFAG), 295-315 (VALG…WLAI), 333-353 (GVSL…LLAF), and 364-384 (VGVL…LSLT).

It belongs to the NhaA Na(+)/H(+) (TC 2.A.33) antiporter family.

The protein localises to the cell inner membrane. It catalyses the reaction Na(+)(in) + 2 H(+)(out) = Na(+)(out) + 2 H(+)(in). Its function is as follows. Na(+)/H(+) antiporter that extrudes sodium in exchange for external protons. This is Na(+)/H(+) antiporter NhaA from Caulobacter vibrioides (strain ATCC 19089 / CIP 103742 / CB 15) (Caulobacter crescentus).